Consider the following 38-residue polypeptide: Putative ORF10 protein (38 aa).

As to quaternary structure, binds host ZYG11B. This would not play any role in SARS-CoV-2 infection.

The polypeptide is Putative ORF10 protein (Severe acute respiratory syndrome coronavirus 2 (2019-nCoV)).